We begin with the raw amino-acid sequence, 756 residues long: Virulence factor MDV010 (756 aa).

The N-terminal stretch at 1–30 (MPSKSIADHHAGYGVALAIVALLLIHGTAL) is a signal peptide. The segment at 96 to 120 (EEHITLSSPRTSTKTTNENGHEKDS) is disordered. Positions 100–113 (TLSSPRTSTKTTNE) are enriched in polar residues. N-linked (GlcNAc...) asparagine; by host glycans are attached at residues asparagine 222, asparagine 241, asparagine 287, asparagine 423, asparagine 495, asparagine 542, asparagine 552, asparagine 580, asparagine 660, asparagine 684, asparagine 715, and asparagine 744.

The protein resides in the secreted. Functionally, may play a role in host immune modulation since the protein is secreted and provides an advantage for growth in vivo while it is completely dispensable in cell culture. The sequence is that of Virulence factor MDV010 (MDV010) from Gallid herpesvirus 2 (strain Chicken/Md5/ATCC VR-987) (GaHV-2).